The following is a 156-amino-acid chain: Myosin regulatory light chain, striated adductor muscle (156 aa).

At A1 the chain carries Blocked amino end (Ala). EF-hand domains are found at residues 15 to 50 and 84 to 119; these read KQIQEMKEAFSMIDVDRDGFVNKDDLKAISEQLGRT and DTEETLRNAFAMFDELDTKKLNIEYIKDLLENMGDN. Residues D28, D30, D32, and D39 each contribute to the Ca(2+) site.

In molluscan muscle, calcium regulation is associated with myosin rather than with actin. Muscle myosin contains two types of light chains: the catalytic light chain, essential for ATPase activity, and the regulatory light chain, a calcium-binding protein responsible for Ca(2+) dependent binding and Ca(2+) dependent Mg-ATPase activity. The chain is Myosin regulatory light chain, striated adductor muscle from Mizuhopecten yessoensis (Japanese scallop).